A 342-amino-acid polypeptide reads, in one-letter code: MDTAQWPQEIVVKPLEEIVTNTCPKPQPQPLQPQQPPSVGGERKARPEKDQAVNCPRCNSTNTKFCYYNNYSLTQPRYFCKGCRRYWTEGGSLRNIPVGGGSRKNKRSHSSSSDISNNHSDSTQPATKKHLSDHHHHLMSMSQQGLTGQNPKFLETTQQDLNLGFSPHGMIRTNFTDLIHNIGNNTNKSNNNNNPLIVSSCSAMATSSLDLIRNNSNNGNSSNSSFMGFPVHNQDPASGGFSMQDHYKPCNTNTTLLGFSLDHHHNNGFHGGFQGGEEGGEGGDDVNGRHLFPFEDLKLPVSSSSATINVDINEHQKRGSGSDAAATSGGYWTGMLSGGSWC.

Residues 21-54 (NTCPKPQPQPLQPQQPPSVGGERKARPEKDQAVN) are disordered. Pro residues predominate over residues 25-36 (KPQPQPLQPQQP). Basic and acidic residues predominate over residues 41-51 (GERKARPEKDQ). The Dof-type zinc finger occupies 53-107 (VNCPRCNSTNTKFCYYNNYSLTQPRYFCKGCRRYWTEGGSLRNIPVGGGSRKNKR). The Zn(2+) site is built by Cys-55, Cys-58, Cys-80, and Cys-83. Residues 94 to 136 (RNIPVGGGSRKNKRSHSSSSDISNNHSDSTQPATKKHLSDHHH) form a disordered region. Low complexity predominate over residues 110–122 (SSSSDISNNHSDS). The segment covering 127–136 (TKKHLSDHHH) has biased composition (basic residues).

Accumulates in the stele.

The protein localises to the nucleus. In terms of biological role, transcription factor that binds specifically to a 5'-AA[AG]G-3' consensus core sequence. This Arabidopsis thaliana (Mouse-ear cress) protein is Dof zinc finger protein DOF4.6.